The sequence spans 143 residues: Large ribosomal subunit protein uL22c (143 aa).

The protein belongs to the universal ribosomal protein uL22 family. As to quaternary structure, part of the 50S ribosomal subunit.

The protein resides in the plastid. The protein localises to the chloroplast. This protein binds specifically to 23S rRNA. Its function is as follows. The globular domain of the protein is located near the polypeptide exit tunnel on the outside of the subunit, while an extended beta-hairpin is found that lines the wall of the exit tunnel in the center of the 70S ribosome. This Piper cenocladum (Ant piper) protein is Large ribosomal subunit protein uL22c (rpl22).